Consider the following 261-residue polypeptide: Neurexophilin-2 (261 aa).

Residues 1 to 22 (MSLRPLPLLVVPGLLQLLFCDS) form the signal peptide. Positions 23–87 (EEVIHNTESV…WDWLANITEI (65 aa)) are II. N-linked (GlcNAc...) asparagine glycosylation is found at Asn83, Asn136, Asn146, and Asn152. The segment at 88–166 (QEQLARTKRR…LVPPSKVVEF (79 aa)) is III. An IV (linker domain) region spans residues 167–175 (EISPQSTLE). The tract at residues 176-261 (TKESKSFNCH…HSETPYLSFG (86 aa)) is v (Cys-rich).

It belongs to the neurexophilin family. Post-translationally, may be proteolytically processed at the boundary between the N-terminal non-conserved and the central conserved domain in neuron-like cells.

It localises to the secreted. Its function is as follows. May be signaling molecules that resemble neuropeptides and that act by binding to alpha-neurexins and possibly other receptors. The chain is Neurexophilin-2 (Nxph2) from Mus musculus (Mouse).